The chain runs to 75 residues: MAKLSFTFCFLLFLLLSSIAAGSRPLEGARVGVKVRGLSPSIEATSPTVEDDQAAGSHGKSPERLSPGGPDPQHH.

The N-terminal stretch at 1 to 22 is a signal peptide; it reads MAKLSFTFCFLLFLLLSSIAAG. The tract at residues 40-75 is disordered; that stretch reads PSIEATSPTVEDDQAAGSHGKSPERLSPGGPDPQHH. Hydroxyproline occurs at positions 67 and 70. Pro70 carries O-linked (Ara...) hydroxyproline glycosylation.

Belongs to the CLV3/ESR signal peptide family. Interacts with the extracellular leucine-rich repeat region of CLV1. Post-translationally, the O-glycosylation (arabinosylation) of the hydroxyproline Pro-70 enhances binding affinity of the CLE2p peptide for its receptor. In terms of tissue distribution, mostly expressed in roots and seedlings, and, to a lower extent, in apex.

Its subcellular location is the secreted. It is found in the extracellular space. Functionally, extracellular signal peptide that regulates cell fate. May act with CLV1 as a ligand-receptor pair in a signal transduction pathway, coordinating growth between adjacent meristematic regions. This chain is CLAVATA3/ESR (CLE)-related protein 2, found in Arabidopsis thaliana (Mouse-ear cress).